The following is a 372-amino-acid chain: Ribosomal RNA small subunit methyltransferase H (372 aa).

Residues 78–80 (GGH), D97, Y124, D148, and Q155 contribute to the S-adenosyl-L-methionine site.

The protein belongs to the methyltransferase superfamily. RsmH family.

It is found in the cytoplasm. The enzyme catalyses cytidine(1402) in 16S rRNA + S-adenosyl-L-methionine = N(4)-methylcytidine(1402) in 16S rRNA + S-adenosyl-L-homocysteine + H(+). Its function is as follows. Specifically methylates the N4 position of cytidine in position 1402 (C1402) of 16S rRNA. This Mycobacterium leprae (strain Br4923) protein is Ribosomal RNA small subunit methyltransferase H.